An 81-amino-acid polypeptide reads, in one-letter code: Xenopsin peptides (81 aa).

Positions 1-20 (MYKGIFLCVLLAVICANSLA) are cleaved as a signal peptide. Positions 21 to 37 (TPSSDADEDNDEVERYV) are excised as a propeptide. The propeptide at 65-73 (EAMLRSAEA) is removed in mature form by a dipeptidylpeptidase.

It belongs to the gastrin/cholecystokinin family. Magainin subfamily. XPF is synthesized in the stomach and stored in a novel granular multinucleated cell in the gastric mucosa, it is stored as active, processed peptides in large granules within the granular gland secretions of the skin.

It is found in the secreted. Functionally, xenopsin is a neurotensin-like octapeptide. Its function is as follows. XPF has antimicrobial activity. The sequence is that of Xenopsin peptides from Xenopus laevis (African clawed frog).